We begin with the raw amino-acid sequence, 43 residues long: DRDSCVDKSKCGKYGYYQECQDCCKNAGHNGGTCVYYKCKCNP.

Disulfide bonds link C5/C23, C11/C34, C20/C39, and C24/C41.

The protein belongs to the ergtoxin family. Gamma-KTx 4 subfamily. In terms of tissue distribution, expressed by the venom gland.

The protein resides in the secreted. Reversibly blocks Kv11/ERG potassium channels. This is Potassium channel toxin gamma-KTx 4.2 from Centruroides noxius (Mexican scorpion).